The following is a 261-amino-acid chain: Enolase-phosphatase E1 (261 aa).

Residues D16 and E18 each contribute to the Mg(2+) site. Substrate contacts are provided by residues 153–154 (SS) and K187. Mg(2+) is bound at residue D212.

The protein belongs to the HAD-like hydrolase superfamily. MasA/MtnC family. Monomer. Mg(2+) is required as a cofactor.

It localises to the cytoplasm. The protein resides in the nucleus. The enzyme catalyses 5-methylsulfanyl-2,3-dioxopentyl phosphate + H2O = 1,2-dihydroxy-5-(methylsulfanyl)pent-1-en-3-one + phosphate. It functions in the pathway amino-acid biosynthesis; L-methionine biosynthesis via salvage pathway; L-methionine from S-methyl-5-thio-alpha-D-ribose 1-phosphate: step 3/6. Its pathway is amino-acid biosynthesis; L-methionine biosynthesis via salvage pathway; L-methionine from S-methyl-5-thio-alpha-D-ribose 1-phosphate: step 4/6. Its function is as follows. Bifunctional enzyme that catalyzes the enolization of 2,3-diketo-5-methylthiopentyl-1-phosphate (DK-MTP-1-P) into the intermediate 2-hydroxy-3-keto-5-methylthiopentenyl-1-phosphate (HK-MTPenyl-1-P), which is then dephosphorylated to form the acireductone 1,2-dihydroxy-3-keto-5-methylthiopentene (DHK-MTPene). This chain is Enolase-phosphatase E1, found in Homo sapiens (Human).